A 487-amino-acid chain; its full sequence is Betaine aldehyde dehydrogenase (487 aa).

Positions 26, 27, and 93 each coordinate K(+). Residue 150–152 (GAW) coordinates NAD(+). Lysine 162 serves as the catalytic Charge relay system. Residues 176-179 (KPSE) and 229-232 (SVPT) contribute to the NAD(+) site. Leucine 244 is a binding site for K(+). Glutamate 250 serves as the catalytic Proton acceptor. The NAD(+) site is built by glycine 252, cysteine 284, and glutamate 384. The Nucleophile role is filled by cysteine 284. Cysteine 284 bears the Cysteine sulfenic acid (-SOH) mark. Residues lysine 454 and glycine 457 each coordinate K(+). The active-site Charge relay system is the glutamate 461.

This sequence belongs to the aldehyde dehydrogenase family. Dimer of dimers. K(+) serves as cofactor.

The catalysed reaction is betaine aldehyde + NAD(+) + H2O = glycine betaine + NADH + 2 H(+). It functions in the pathway amine and polyamine biosynthesis; betaine biosynthesis via choline pathway; betaine from betaine aldehyde: step 1/1. Involved in the biosynthesis of the osmoprotectant glycine betaine. Catalyzes the irreversible oxidation of betaine aldehyde to the corresponding acid. This is Betaine aldehyde dehydrogenase from Sinorhizobium fredii (strain NBRC 101917 / NGR234).